A 503-amino-acid chain; its full sequence is Hexose transporter 1 (503 aa).

The Cytoplasmic portion of the chain corresponds to 1 to 26; it reads MKKSSKEISPSQSLKNGGSDHFFNTS. The helical transmembrane segment at 27 to 47 threads the bilayer; that stretch reads LMYVLAACLASFIFGYQVSVL. At 48–76 the chain is on the extracellular side; the sequence is NTIKNFIVIEFGWCTGNKVECDDSTLKSS. Cysteines 61 and 68 form a disulfide. A helical transmembrane segment spans residues 77 to 97; sequence FLLASVFIGAVVGSGFSDYLV. The Cytoplasmic segment spans residues 98–102; it reads QHGRR. The chain crosses the membrane as a helical span at residues 103–123; the sequence is FSLLVIYNFFILVSILTSITH. Over 124–132 the chain is Extracellular; it reads HFHTILFSR. A helical membrane pass occupies residues 133 to 153; the sequence is LLSGFGVGLITVSVPMYISEM. Residues 154 to 163 are Cytoplasmic-facing; sequence THKDKKGAYG. The helical transmembrane segment at 164–184 threads the bilayer; that stretch reads VLHQLFITFGILVAVLLGMAM. Q167 is a binding site for alpha-D-glucose. Q167 contacts beta-D-glucose. Over 185–205 the chain is Extracellular; the sequence is GEAPDAKSVDALGEFQKIWWR. The helical transmembrane segment at 206–226 threads the bilayer; sequence LMFFFPCLISILGIVLLTFFY. Topologically, residues 227–291 are cytoplasmic; sequence KEETPYYLFE…RAMQIPSYRN (65 aa). The chain crosses the membrane as a helical span at residues 292–312; that stretch reads VILLGCILSGLQQFTGINVLV. The alpha-D-glucose site is built by Q303, Q304, and N309. Residue Q303 coordinates beta-D-glucose. N309 contributes to the beta-D-glucose binding site. The Extracellular segment spans residues 313 to 329; the sequence is SNSNELYKEFLSNKLIT. Residues 330 to 350 form a helical membrane-spanning segment; sequence TLSVIMTVVNFLMTFPAIYIV. Position 339 (N339) interacts with beta-D-glucose. Over 351–356 the chain is Cytoplasmic; it reads EKLGRK. The helical transmembrane segment at 357–377 threads the bilayer; the sequence is TLLLCGCAGVTLAAFLPTAIA. Over 378–391 the chain is Extracellular; it reads NQIDRSSDLVRNLS. The helical transmembrane segment at 392–412 threads the bilayer; that stretch reads IAATFVMIISFAVSYGPVLWI. Alpha-D-glucose is bound at residue W411. At 413 to 428 the chain is on the cytoplasmic side; that stretch reads YLHEMFPSEIKDSAAS. Residues 429 to 449 traverse the membrane as a helical segment; that stretch reads LASLVNWVCAIIVVFPSDIII. Topologically, residues 450 to 454 are extracellular; sequence KKSPT. A helical membrane pass occupies residues 455–475; the sequence is ILFFIFSGMSILSFLFIFFFI. Over 476–503 the chain is Cytoplasmic; the sequence is KETKGGEIGTSPYITMEERQKHMGKSAV.

The protein belongs to the major facilitator superfamily. Sugar transporter (TC 2.A.1.1) family. Homodimer.

The protein resides in the cell membrane. It carries out the reaction D-glucose(out) = D-glucose(in). The catalysed reaction is D-fructose(out) = D-fructose(in). It catalyses the reaction D-galactose(in) = D-galactose(out). The enzyme catalyses D-mannose(out) = D-mannose(in). It carries out the reaction D-glucosamine(out) = D-glucosamine(in). The catalysed reaction is D-xylose(out) = D-xylose(in). With respect to regulation, inhibited by compound 3361 (3-O-((undec-10-en)-1-yl)-D-glucose). Functionally, sodium-independent facilitative hexose transporter. Can transport D-glucose and D-fructose. Can transport D-mannose, D-galactose, D-xylose and D-glucosamine. In Plasmodium vivax, this protein is Hexose transporter 1.